We begin with the raw amino-acid sequence, 59 residues long: Small, acid-soluble spore protein H (59 aa).

It belongs to the SspH family.

It localises to the spore core. This is Small, acid-soluble spore protein H from Alkaliphilus metalliredigens (strain QYMF).